We begin with the raw amino-acid sequence, 291 residues long: N-acetylmannosamine kinase (291 aa).

Residues 5-12 and 132-139 contribute to the ATP site; these read AIDIGGTK and GVGGGVVS. The Zn(2+) site is built by His156, Cys166, Cys168, and Cys173.

Belongs to the ROK (NagC/XylR) family. NanK subfamily. As to quaternary structure, homodimer.

The enzyme catalyses an N-acyl-D-mannosamine + ATP = an N-acyl-D-mannosamine 6-phosphate + ADP + H(+). Its pathway is amino-sugar metabolism; N-acetylneuraminate degradation; D-fructose 6-phosphate from N-acetylneuraminate: step 2/5. Its function is as follows. Catalyzes the phosphorylation of N-acetylmannosamine (ManNAc) to ManNAc-6-P. The chain is N-acetylmannosamine kinase from Escherichia coli O127:H6 (strain E2348/69 / EPEC).